Here is a 415-residue protein sequence, read N- to C-terminus: Serine hydroxymethyltransferase (415 aa).

Residues Leu-117 and 121-123 (GHL) contribute to the (6S)-5,6,7,8-tetrahydrofolate site. An N6-(pyridoxal phosphate)lysine modification is found at Lys-226.

The protein belongs to the SHMT family. Homodimer. Pyridoxal 5'-phosphate is required as a cofactor.

The protein localises to the cytoplasm. It catalyses the reaction (6R)-5,10-methylene-5,6,7,8-tetrahydrofolate + glycine + H2O = (6S)-5,6,7,8-tetrahydrofolate + L-serine. Its pathway is one-carbon metabolism; tetrahydrofolate interconversion. The protein operates within amino-acid biosynthesis; glycine biosynthesis; glycine from L-serine: step 1/1. Its function is as follows. Catalyzes the reversible interconversion of serine and glycine with tetrahydrofolate (THF) serving as the one-carbon carrier. This reaction serves as the major source of one-carbon groups required for the biosynthesis of purines, thymidylate, methionine, and other important biomolecules. Also exhibits THF-independent aldolase activity toward beta-hydroxyamino acids, producing glycine and aldehydes, via a retro-aldol mechanism. This is Serine hydroxymethyltransferase from Leptospira borgpetersenii serovar Hardjo-bovis (strain JB197).